Here is a 329-residue protein sequence, read N- to C-terminus: Quinone oxidoreductase (329 aa).

Position 2 is an N-acetylalanine (A2). K23 is subject to N6-acetyllysine. NADP(+)-binding positions include Y53, 158 to 161, G181, H200, N229, 246 to 249, and 269 to 271; these read SGGV, VGSR, and VTV. S248 is modified (phosphoserine). The residue at position 296 (K296) is an N6-succinyllysine.

Belongs to the zinc-containing alcohol dehydrogenase family. Quinone oxidoreductase subfamily. As to quaternary structure, homotetramer.

It is found in the cytoplasm. It carries out the reaction 2 a quinone + NADPH + H(+) = 2 a 1,4-benzosemiquinone + NADP(+). Functionally, does not have alcohol dehydrogenase activity. Binds NADP and acts through a one-electron transfer process. Orthoquinones, such as 1,2-naphthoquinone or 9,10-phenanthrenequinone, are the best substrates (in vitro). May act in the detoxification of xenobiotics. Interacts with (AU)-rich elements (ARE) in the 3'-UTR of target mRNA species and enhances their stability. NADPH binding interferes with mRNA binding. The chain is Quinone oxidoreductase (CRYZ) from Pongo abelii (Sumatran orangutan).